The chain runs to 626 residues: Leucine-rich repeat and fibronectin type-III domain-containing protein 3 (626 aa).

An N-terminal signal peptide occupies residues 1–16 (MAVLPLLLCLLPLAPA). Residues 17-539 (SSPPQPATSS…PHAPFLGGTM (523 aa)) lie on the Extracellular side of the membrane. Residues 19 to 59 (PPQPATSSPCPRRCRCQTQSLPLSVLCPGAGLLFVPPSLDR) enclose the LRRNT domain. LRR repeat units lie at residues 84-105 (GLLHLSLSRNTIRHVAAGAFAD), 108-129 (ALRALHLDGNRLTSLGEGQLRG), 132-153 (NLRHLILSNNQLAALAAGALDD), 157-178 (TLEDLDLSYNNLEQLPWEALGR), 181-202 (NVNTLGLDHNLLASVPAGAFSR), and 205-226 (KLARLDMTSNRLTTIPPDPLFS). The LRRCT domain maps to 249–295 (NPLHCNCELVWLRRLAREDDLEACASPPALGGRYFWAVGEEEFVCEP). The Ig-like domain occupies 295 to 382 (PPVVTHRSPP…GEATAAVELT (88 aa)). Residues 308–395 (PAGRPAALRC…PPPPQLANST (88 aa)) form the Fibronectin type-III 1 domain. C317 and C366 are oxidised to a cystine. 3 N-linked (GlcNAc...) asparagine glycosylation sites follow: N339, N348, and N393. The tract at residues 382–423 (TVGPPPPPQLANSTSCDPPRDGEPDALTPPSAASASAKVADT) is disordered. Positions 406–423 (DALTPPSAASASAKVADT) are enriched in low complexity. The Fibronectin type-III 2 domain occupies 425–523 (APTDRGVQVT…GCARFSTEPA (99 aa)). Residues 540-560 (IIALGGVIVASVLVFIFVLLL) form a helical membrane-spanning segment. Residues 561-626 (RYKVHGVQPP…WGPSHEPAGP (66 aa)) are Cytoplasmic-facing.

This sequence belongs to the LRFN family. As to quaternary structure, can form heteromeric complexes with LRFN1, LRFN2, LRFN4 and LRFN5. Able to form homomeric complexes across cell junctions, between adjacent cells. Does not interact with DLG4. N-glycosylated. As to expression, expressed in brain. Within brain, expressed in hippocampus, cerebellum, olfactory bulb and forebrain (at protein level).

It localises to the cell membrane. The protein resides in the cell projection. It is found in the axon. Its subcellular location is the dendrite. The protein localises to the synapse. It localises to the presynaptic cell membrane. The protein resides in the postsynaptic cell membrane. In terms of biological role, cell adhesion molecule that mediates homophilic cell-cell adhesion in a Ca(2+)-independent manner. Promotes neurite outgrowth in hippocampal neurons. The chain is Leucine-rich repeat and fibronectin type-III domain-containing protein 3 from Rattus norvegicus (Rat).